The following is a 560-amino-acid chain: Kinesin light chain 1 (560 aa).

The stretch at 27–156 forms a coiled coil; that stretch reads KTKQVIQGLE…HLEFMNQLKK (130 aa). Positions 156–176 are enriched in basic and acidic residues; it reads KYDDDISPSEDKDSDSSKEPL. The segment at 156-203 is disordered; sequence KYDDDISPSEDKDSDSSKEPLDDLFPNDEDDPGQGIQQQHSSAAAAAQ. Ser-162 carries the phosphoserine modification. Positions 188–203 are enriched in low complexity; the sequence is GQGIQQQHSSAAAAAQ. 5 TPR repeats span residues 213-246, 255-288, 297-330, 339-372, and 381-414; these read LRTL…LEKT, ATML…REKT, AATL…REKV, AKQL…YQTK, and AKTK…AHER. Phosphotyrosine is present on Tyr-449. Ser-460 carries the phosphoserine modification. Residues 464-497 form a TPR 6 repeat; sequence TTTLKNLGALYRRQGKFEAAETLEEAALRSRKQG. Residues Ser-521 and Ser-524 each carry the phosphoserine modification.

The protein belongs to the kinesin light chain family. Oligomeric complex composed of two heavy chains and two light chains. Interacts with SPAG9. Interacts with ATCAY; may link mitochondria to KLC1 and regulate mitochondria localization into neuron projections. Interacts (via TPR repeats) with TOR1A; the interaction associates TOR1A with the kinesin oligomeric complex. Interacts with BORCS5. Interacts with MAPK8IP3/JIP3 and NTRK2/TRKB; interaction with NTRK2/TRKB is mediated by MAPK8IP3/JIP3. Interacts with CLSTN1; phosphorylation at Ser-460 inhibits interaction with CLSTN1. In terms of processing, phosphorylation at Ser-460 by ERK inhibits interaction with CLSTN1 and localization to cytoplasmic vesicles. In terms of tissue distribution, expressed in brain (at protein level).

It is found in the cell projection. It localises to the growth cone. The protein localises to the cytoplasmic vesicle. The protein resides in the cytoplasm. Its subcellular location is the cytoskeleton. Functionally, kinesin is a microtubule-associated force-producing protein that may play a role in organelle transport. The light chain may function in coupling of cargo to the heavy chain or in the modulation of its ATPase activity. This Rattus norvegicus (Rat) protein is Kinesin light chain 1 (Klc1).